Here is a 503-residue protein sequence, read N- to C-terminus: Xylan O-acetyltransferase 12 (503 aa).

The Cytoplasmic portion of the chain corresponds to 1-54 (MWSALFSHLREVHKRSGVKEEKLIMKSPAAAGEAAGCHKPQATATNKMTVLQSP). A helical; Signal-anchor for type II membrane protein membrane pass occupies residues 55-77 (LGLRTILTSLVAFFIVVSSVSLL). At 78-503 (FDRSQDAQAQ…EFLYAYLMHK (426 aa)) the chain is on the lumenal side. Disulfide bonds link C153–C204, C175–C240, C184–C484, and C400–C480. 4 N-linked (GlcNAc...) asparagine glycosylation sites follow: N154, N164, N190, and N210. The GDS motif signature appears at 227-229 (GDS). The Nucleophile role is filled by S229. 5 N-linked (GlcNAc...) asparagine glycosylation sites follow: N256, N268, N373, N402, and N443. D479 (proton donor) is an active-site residue. The DXXH motif signature appears at 479 to 482 (DCTH). The active-site Proton acceptor is the H482.

Belongs to the PC-esterase family. TBL subfamily.

It is found in the golgi apparatus membrane. Its function is as follows. Xylan acetyltransferase required for 2-O- and 3-O-monoacetylation of xylosyl residues in xylan. Catalyzes the 2-O-acetylation of xylan, followed by nonenzymatic acetyl migration to the O-3 position, resulting in products that are monoacetylated at both O-2 and O-3 positions. The polypeptide is Xylan O-acetyltransferase 12 (Oryza sativa subsp. japonica (Rice)).